The primary structure comprises 179 residues: Large ribosomal subunit protein uL6 (179 aa).

This sequence belongs to the universal ribosomal protein uL6 family. In terms of assembly, part of the 50S ribosomal subunit.

This protein binds to the 23S rRNA, and is important in its secondary structure. It is located near the subunit interface in the base of the L7/L12 stalk, and near the tRNA binding site of the peptidyltransferase center. The protein is Large ribosomal subunit protein uL6 of Geobacter sulfurreducens (strain ATCC 51573 / DSM 12127 / PCA).